A 440-amino-acid polypeptide reads, in one-letter code: Ribulose bisphosphate carboxylase large chain (440 aa).

Residue K4 is modified to N6,N6,N6-trimethyllysine. Residues N113 and T163 each contribute to the substrate site. K165 acts as the Proton acceptor in catalysis. K167 lines the substrate pocket. The Mg(2+) site is built by K191, D193, and E194. K191 is modified (N6-carboxylysine). Residue H284 is the Proton acceptor of the active site. R285, H317, and S369 together coordinate substrate.

It belongs to the RuBisCO large chain family. Type I subfamily. Heterohexadecamer of 8 large chains and 8 small chains; disulfide-linked. The disulfide link is formed within the large subunit homodimers. It depends on Mg(2+) as a cofactor. Post-translationally, the disulfide bond which can form in the large chain dimeric partners within the hexadecamer appears to be associated with oxidative stress and protein turnover.

It is found in the plastid. The protein localises to the chloroplast. It catalyses the reaction 2 (2R)-3-phosphoglycerate + 2 H(+) = D-ribulose 1,5-bisphosphate + CO2 + H2O. It carries out the reaction D-ribulose 1,5-bisphosphate + O2 = 2-phosphoglycolate + (2R)-3-phosphoglycerate + 2 H(+). RuBisCO catalyzes two reactions: the carboxylation of D-ribulose 1,5-bisphosphate, the primary event in carbon dioxide fixation, as well as the oxidative fragmentation of the pentose substrate in the photorespiration process. Both reactions occur simultaneously and in competition at the same active site. The sequence is that of Ribulose bisphosphate carboxylase large chain from Matteuccia struthiopteris (European ostrich fern).